The following is a 334-amino-acid chain: N-acetylmuramoyl-L-alanine amidase sle1 (334 aa).

The N-terminal stretch at 1–25 (MQKKVIAAIIGTSAISAVAATQANA) is a signal peptide. The LysM 1 domain maps to 27–70 (TTHTVKPGESVWAISNKYGISIAKLKSLNNLTSNLIFPNQVLKV). Low complexity predominate over residues 71–86 (SGSSNSTSNSSRPSTN). The disordered stretch occupies residues 71-90 (SGSSNSTSNSSRPSTNSGGG). LysM domains lie at 91–134 (SYYT…KLKV) and 158–201 (SYYT…KLKV). The region spanning 210 to 334 (GSATTTNRGY…YQVNNYRYIH (125 aa)) is the Peptidase C51 domain.

It localises to the secreted. The protein localises to the cell surface. The enzyme catalyses Hydrolyzes the link between N-acetylmuramoyl residues and L-amino acid residues in certain cell-wall glycopeptides.. In terms of biological role, peptidoglycan hydrolase involved in the splitting of the septum during cell division. The chain is N-acetylmuramoyl-L-alanine amidase sle1 (sle1) from Staphylococcus aureus (strain USA300).